Reading from the N-terminus, the 117-residue chain is Aspartate 1-decarboxylase (117 aa).

Serine 25 functions as the Schiff-base intermediate with substrate; via pyruvic acid in the catalytic mechanism. Position 25 is a pyruvic acid (Ser) (serine 25). Threonine 57 contributes to the substrate binding site. The Proton donor role is filled by tyrosine 58. 72 to 74 is a substrate binding site; that stretch reads GAA.

It belongs to the PanD family. Heterooctamer of four alpha and four beta subunits. It depends on pyruvate as a cofactor. In terms of processing, is synthesized initially as an inactive proenzyme, which is activated by self-cleavage at a specific serine bond to produce a beta-subunit with a hydroxyl group at its C-terminus and an alpha-subunit with a pyruvoyl group at its N-terminus.

It localises to the cytoplasm. It carries out the reaction L-aspartate + H(+) = beta-alanine + CO2. It functions in the pathway cofactor biosynthesis; (R)-pantothenate biosynthesis; beta-alanine from L-aspartate: step 1/1. In terms of biological role, catalyzes the pyruvoyl-dependent decarboxylation of aspartate to produce beta-alanine. This Helicobacter pylori (strain ATCC 700392 / 26695) (Campylobacter pylori) protein is Aspartate 1-decarboxylase.